The sequence spans 251 residues: Probable transcriptional regulatory protein cu0933 (251 aa).

Positions 56 to 79 (AKKSSVPNDNIERARKRGSGEEAG) are disordered.

The protein belongs to the TACO1 family.

The protein resides in the cytoplasm. This is Probable transcriptional regulatory protein cu0933 from Corynebacterium urealyticum (strain ATCC 43042 / DSM 7109).